The primary structure comprises 77 residues: Small ribosomal subunit protein uS17 (77 aa).

It belongs to the universal ribosomal protein uS17 family. As to quaternary structure, part of the 30S ribosomal subunit.

In terms of biological role, one of the primary rRNA binding proteins, it binds specifically to the 5'-end of 16S ribosomal RNA. The sequence is that of Small ribosomal subunit protein uS17 from Wolbachia sp. subsp. Brugia malayi (strain TRS).